The following is a 122-amino-acid chain: MAKSSFKISNPLEARMSESSRIREKYPDRIPVIVEKAGQSDVPDIDKKKYLVPADLTVGQFVYVVRKRIKLGAEKAIFVFVKNTLPPTAALMSAIYEEHKDEDGFLYMTYSGENTFGSLTVA.

The tract at residues 1-21 is disordered; the sequence is MAKSSFKISNPLEARMSESSR. A lipid anchor (Phosphatidylethanolamine amidated glycine) is attached at G117. A propeptide spans 118-122 (removed in mature form); that stretch reads SLTVA.

This sequence belongs to the ATG8 family. As to quaternary structure, interacts with ATG4B. Interacts with NBR1. In terms of processing, the C-terminal 5 residues are removed by ATG4 to expose Gly-117 at the C-terminus. This Gly-117 forms then a thioester bond with the 'Cys-558' of ATG7 (E1-like activating enzyme) before being transferred to the 'Cys-258' of ATG3 (the specific E2 conjugating enzyme), in order to be finally amidated with phosphatidylethanolamine. This lipid modification anchors ATG8 to autophagosomes. Constitutively expressed.

It is found in the cytoplasmic vesicle. Its subcellular location is the autophagosome membrane. The protein resides in the vacuole membrane. It localises to the cytoplasm. The protein localises to the cytoskeleton. In terms of biological role, ubiquitin-like modifier involved in autophagosomes formation. May mediate the delivery of the autophagosomes to the vacuole via the microtubule cytoskeleton. This is Autophagy-related protein 8a (ATG8A) from Arabidopsis thaliana (Mouse-ear cress).